A 152-amino-acid chain; its full sequence is Large ribosomal subunit protein bL9 (152 aa).

It belongs to the bacterial ribosomal protein bL9 family.

Functionally, binds to the 23S rRNA. The protein is Large ribosomal subunit protein bL9 of Streptococcus thermophilus (strain ATCC BAA-491 / LMD-9).